Consider the following 130-residue polypeptide: Small ribosomal subunit protein uS11c (130 aa).

It belongs to the universal ribosomal protein uS11 family. As to quaternary structure, part of the 30S ribosomal subunit.

The protein resides in the plastid. The protein localises to the chloroplast. This is Small ribosomal subunit protein uS11c from Nephroselmis olivacea (Green alga).